The primary structure comprises 643 residues: Enzymatic polyprotein (643 aa).

In terms of domain architecture, Peptidase A3A spans 6 to 209; the sequence is NPNATFITVK…KEVNVPNNIP (204 aa). The active-site For protease activity is Asp26. The Reverse transcriptase domain maps to 226-410; that stretch reads VRKGIIEESK…QTIDFLGLTL (185 aa). Positions 296, 360, and 361 each coordinate Mg(2+).

Belongs to the caulimoviridae enzymatic polyprotein family.

It carries out the reaction DNA(n) + a 2'-deoxyribonucleoside 5'-triphosphate = DNA(n+1) + diphosphate. Its function is as follows. Encodes for at least two polypeptides: protease (PR) and reverse transcriptase (RT). The protease processes the polyprotein in cis. Reverse transcriptase is multifunctional enzyme that converts the viral RNA genome into dsDNA in viral cytoplasmic capsids. This enzyme displays a DNA polymerase activity that can copy either DNA or RNA templates, and a ribonuclease H (RNase H) activity that cleaves the RNA strand of RNA-DNA heteroduplexes in a partially processive 3'- to 5'-endonucleasic mode. Neo-synthesized pregenomic RNA (pgRNA) are encapsidated, and reverse-transcribed inside the nucleocapsid. Partial (+)DNA is synthesized from the (-)DNA template and generates the relaxed circular DNA (RC-DNA) genome. After budding and infection, the RC-DNA migrates in the nucleus, and is converted into a plasmid-like covalently closed circular DNA (cccDNA). This chain is Enzymatic polyprotein, found in Cestrum parqui (CmYLCV).